We begin with the raw amino-acid sequence, 117 residues long: Aspartate 1-decarboxylase (117 aa).

The active-site Schiff-base intermediate with substrate; via pyruvic acid is the Ser-25. Ser-25 carries the post-translational modification Pyruvic acid (Ser). Thr-57 lines the substrate pocket. Catalysis depends on Tyr-58, which acts as the Proton donor. 73 to 75 contacts substrate; the sequence is GAA.

Belongs to the PanD family. In terms of assembly, heterooctamer of four alpha and four beta subunits. It depends on pyruvate as a cofactor. In terms of processing, is synthesized initially as an inactive proenzyme, which is activated by self-cleavage at a specific serine bond to produce a beta-subunit with a hydroxyl group at its C-terminus and an alpha-subunit with a pyruvoyl group at its N-terminus.

It is found in the cytoplasm. The catalysed reaction is L-aspartate + H(+) = beta-alanine + CO2. It functions in the pathway cofactor biosynthesis; (R)-pantothenate biosynthesis; beta-alanine from L-aspartate: step 1/1. Catalyzes the pyruvoyl-dependent decarboxylation of aspartate to produce beta-alanine. The polypeptide is Aspartate 1-decarboxylase (Bacteroides fragilis (strain ATCC 25285 / DSM 2151 / CCUG 4856 / JCM 11019 / LMG 10263 / NCTC 9343 / Onslow / VPI 2553 / EN-2)).